Reading from the N-terminus, the 299-residue chain is Epimerase family protein SH2119 (299 aa).

Belongs to the NAD(P)-dependent epimerase/dehydratase family. SDR39U1 subfamily.

The sequence is that of Epimerase family protein SH2119 from Staphylococcus haemolyticus (strain JCSC1435).